The primary structure comprises 372 residues: N-methyl-L-tryptophan oxidase (372 aa).

4–34 (DLIIIGSGSVGAAAGYYATRAGLKVLMTDAH) contributes to the FAD binding site. Cys-307 is modified (S-8alpha-FAD cysteine).

Belongs to the MSOX/MTOX family. MTOX subfamily. In terms of assembly, monomer. Requires FAD as cofactor.

The enzyme catalyses N(alpha)-methyl-L-tryptophan + O2 + H2O = L-tryptophan + formaldehyde + H2O2. Its function is as follows. Catalyzes the oxidative demethylation of N-methyl-L-tryptophan. The chain is N-methyl-L-tryptophan oxidase from Salmonella typhi.